Reading from the N-terminus, the 700-residue chain is Elongation factor G (700 aa).

The 276-residue stretch at 13-288 folds into the tr-type G domain; the sequence is SKIRNIGITA…AVIDYLPAPD (276 aa). Residues 22 to 29, 86 to 90, and 140 to 143 each bind GTP; these read AHIDAGKT, DTPGH, and NKLD.

The protein belongs to the TRAFAC class translation factor GTPase superfamily. Classic translation factor GTPase family. EF-G/EF-2 subfamily.

The protein localises to the cytoplasm. Its function is as follows. Catalyzes the GTP-dependent ribosomal translocation step during translation elongation. During this step, the ribosome changes from the pre-translocational (PRE) to the post-translocational (POST) state as the newly formed A-site-bound peptidyl-tRNA and P-site-bound deacylated tRNA move to the P and E sites, respectively. Catalyzes the coordinated movement of the two tRNA molecules, the mRNA and conformational changes in the ribosome. In Gluconobacter oxydans (strain 621H) (Gluconobacter suboxydans), this protein is Elongation factor G.